Here is a 156-residue protein sequence, read N- to C-terminus: Small ribosomal subunit protein uS7 (156 aa).

Belongs to the universal ribosomal protein uS7 family. Part of the 30S ribosomal subunit. Contacts proteins S9 and S11.

One of the primary rRNA binding proteins, it binds directly to 16S rRNA where it nucleates assembly of the head domain of the 30S subunit. Is located at the subunit interface close to the decoding center, probably blocks exit of the E-site tRNA. The protein is Small ribosomal subunit protein uS7 of Glaesserella parasuis serovar 5 (strain SH0165) (Haemophilus parasuis).